The primary structure comprises 384 residues: Chaperone protein DnaJ (384 aa).

The 65-residue stretch at 4–68 (DFYDVLGVSR…EKRQMYDQLG (65 aa)) folds into the J domain. Disordered stretches follow at residues 74–105 (QAQK…GMGG) and 113–132 (NNLF…QGRD). Residues 79–105 (GAGGGGGGRGQGNPFGGGGNPFGGMGG) are compositionally biased toward gly residues. The CR-type zinc-finger motif lies at 147–229 (GVERDVTIRR…CRGSGRVRRT (83 aa)). Cys-160, Cys-163, Cys-177, Cys-180, Cys-203, Cys-206, Cys-217, and Cys-220 together coordinate Zn(2+). 4 CXXCXGXG motif repeats span residues 160 to 167 (CPECDGEG), 177 to 184 (CSECNGSG), 203 to 210 (CRACGGEG), and 217 to 224 (CSECRGSG).

Belongs to the DnaJ family. As to quaternary structure, homodimer. Zn(2+) is required as a cofactor.

It is found in the cytoplasm. Its function is as follows. Participates actively in the response to hyperosmotic and heat shock by preventing the aggregation of stress-denatured proteins and by disaggregating proteins, also in an autonomous, DnaK-independent fashion. Unfolded proteins bind initially to DnaJ; upon interaction with the DnaJ-bound protein, DnaK hydrolyzes its bound ATP, resulting in the formation of a stable complex. GrpE releases ADP from DnaK; ATP binding to DnaK triggers the release of the substrate protein, thus completing the reaction cycle. Several rounds of ATP-dependent interactions between DnaJ, DnaK and GrpE are required for fully efficient folding. Also involved, together with DnaK and GrpE, in the DNA replication of plasmids through activation of initiation proteins. The chain is Chaperone protein DnaJ from Haloferax mediterranei (strain ATCC 33500 / DSM 1411 / JCM 8866 / NBRC 14739 / NCIMB 2177 / R-4) (Halobacterium mediterranei).